The primary structure comprises 314 residues: 4-hydroxy-3-methylbut-2-enyl diphosphate reductase (314 aa).

Residue cysteine 12 coordinates [4Fe-4S] cluster. (2E)-4-hydroxy-3-methylbut-2-enyl diphosphate contacts are provided by histidine 41 and histidine 74. Dimethylallyl diphosphate contacts are provided by histidine 41 and histidine 74. Isopentenyl diphosphate-binding residues include histidine 41 and histidine 74. Cysteine 96 contacts [4Fe-4S] cluster. Histidine 124 serves as a coordination point for (2E)-4-hydroxy-3-methylbut-2-enyl diphosphate. A dimethylallyl diphosphate-binding site is contributed by histidine 124. Isopentenyl diphosphate is bound at residue histidine 124. Residue glutamate 126 is the Proton donor of the active site. Threonine 168 is a binding site for (2E)-4-hydroxy-3-methylbut-2-enyl diphosphate. Cysteine 198 lines the [4Fe-4S] cluster pocket. The (2E)-4-hydroxy-3-methylbut-2-enyl diphosphate site is built by serine 226, serine 227, asparagine 228, and serine 270. Residues serine 226, serine 227, asparagine 228, and serine 270 each contribute to the dimethylallyl diphosphate site. 4 residues coordinate isopentenyl diphosphate: serine 226, serine 227, asparagine 228, and serine 270.

The protein belongs to the IspH family. [4Fe-4S] cluster serves as cofactor.

It catalyses the reaction isopentenyl diphosphate + 2 oxidized [2Fe-2S]-[ferredoxin] + H2O = (2E)-4-hydroxy-3-methylbut-2-enyl diphosphate + 2 reduced [2Fe-2S]-[ferredoxin] + 2 H(+). It carries out the reaction dimethylallyl diphosphate + 2 oxidized [2Fe-2S]-[ferredoxin] + H2O = (2E)-4-hydroxy-3-methylbut-2-enyl diphosphate + 2 reduced [2Fe-2S]-[ferredoxin] + 2 H(+). The protein operates within isoprenoid biosynthesis; dimethylallyl diphosphate biosynthesis; dimethylallyl diphosphate from (2E)-4-hydroxy-3-methylbutenyl diphosphate: step 1/1. Its pathway is isoprenoid biosynthesis; isopentenyl diphosphate biosynthesis via DXP pathway; isopentenyl diphosphate from 1-deoxy-D-xylulose 5-phosphate: step 6/6. Catalyzes the conversion of 1-hydroxy-2-methyl-2-(E)-butenyl 4-diphosphate (HMBPP) into a mixture of isopentenyl diphosphate (IPP) and dimethylallyl diphosphate (DMAPP). Acts in the terminal step of the DOXP/MEP pathway for isoprenoid precursor biosynthesis. This is 4-hydroxy-3-methylbut-2-enyl diphosphate reductase from Ectopseudomonas mendocina (strain ymp) (Pseudomonas mendocina).